A 171-amino-acid polypeptide reads, in one-letter code: Nudix hydrolase DR_0079 (171 aa).

The Nudix hydrolase domain occupies 32 to 162; that stretch reads ERVRVVNAFL…EAAKGDLAEL (131 aa). Residues 69-91 carry the Nudix box motif; sequence GGAVQSGETYEEAFRREAREELN. Mg(2+) is bound by residues Glu-85 and Glu-89.

Belongs to the Nudix hydrolase family. In terms of assembly, monomer. It depends on Mg(2+) as a cofactor.

Inhibited by zinc, calcium or copper ions. Hydrolase that converts various nucleotide triphosphates (NTPs) to the corresponding nucleotide monophosphates and diphosphate, and nucleotide diphosphates to nucleotide monophosphates and inorganic phosphate. Has a marked preference for cytosine ribonucleoside 5'-diphosphate (CDP) and cytosine ribonucleoside 5'-triphosphate (CTP). Has lower activity towards the deoxyribose nucleotides dCDP and dCTP, and towards dGDP, TDP and UDP. The protein is Nudix hydrolase DR_0079 of Deinococcus radiodurans (strain ATCC 13939 / DSM 20539 / JCM 16871 / CCUG 27074 / LMG 4051 / NBRC 15346 / NCIMB 9279 / VKM B-1422 / R1).